Here is a 926-residue protein sequence, read N- to C-terminus: Transcriptional activator protein acu-15 (926 aa).

Residues 24–51 (CDRCRSKKIRCDGIRPCCSQCANVGFEC) constitute a DNA-binding region (zn(2)-C6 fungal-type). Disordered regions lie at residues 100–129 (KMHS…TPAK), 602–649 (LPQS…SASL), and 667–801 (TPQH…TSTG). Over residues 119–129 (EIKRDSGTPAK) the composition is skewed to basic and acidic residues. Low complexity-rich tracts occupy residues 623-632 (AQQGSPSPSA) and 669-681 (QHQQ…LQQQ). Polar residues-rich tracts occupy residues 689–703 (ARSQ…QKAQ) and 726–736 (RTSTGTQSTPN). Low complexity predominate over residues 740–792 (LSLSSPQSPVSPVQMRSQPHQLQQQQQQQPQPQQQQQQHQRSSIASSHSQQGQ).

The protein localises to the nucleus. Its function is as follows. Positive regulator of acetate induction. The chain is Transcriptional activator protein acu-15 (acu-15) from Neurospora crassa (strain ATCC 24698 / 74-OR23-1A / CBS 708.71 / DSM 1257 / FGSC 987).